We begin with the raw amino-acid sequence, 491 residues long: MSLVAYASSDESEPDEAEPEPEEEEAVAPTSGPALGGLFASLPAPKGPALLPPPPQMLAPAFPPPLLLPPPTGDPRLQPPPPLPFGLGGFPPPPGVSPAEAAGVGEGLGLGLPSPRGPGLNLPPPIGGAGPPLGLPKPKKRKEPVKIAAPELHKGDSDSEEDEPTKKKTILQGSSEGTGLSALLPQPKNLTVKETNRLLLPHAFSRKPSDGSPDTKPSRLASKTKTSSLAPVVGTTTTTPSPSAIKAAAKSAALQVTKQITQEEDDSDEEVAPENFFSLPEKAEPPGVEPYPYPIPTVPEELPPGTEPEPAFQDDAANAPLEFKMAAGSSGAPWMPKPGDDYSYNQFSTYGDANAAGAYYQDYYSGGYYPAQDPALVPPQEIAPDASFIDDEAFKRLQGKRNRGREEINFVEIKGDDQLSGAQQWMTKSLTEEKTMKSFSKKKGEQPTGQQRRKHQITYLIHQAKERELELKNTWSENKLSRRQTQAKYGF.

The segment at 1-100 is mediates interaction with MAD2L2; the sequence is MSLVAYASSD…PPPPGVSPAE (100 aa). 3 disordered regions span residues 1 to 244, 260 to 313, and 432 to 454; these read MSLV…SPSA, ITQE…PAFQ, and EEKTMKSFSKKKGEQPTGQQRRK. Over residues 10–26 the composition is skewed to acidic residues; that stretch reads DESEPDEAEPEPEEEEA. Residues 40–49 show a composition bias toward low complexity; the sequence is ASLPAPKGPA. Over residues 50-96 the composition is skewed to pro residues; it reads LLPPPPQMLAPAFPPPLLLPPPTGDPRLQPPPPLPFGLGGFPPPPGV. 6 positions are modified to phosphoserine: Ser97, Ser114, Ser157, Ser159, Ser212, and Ser218. Over residues 111-120 the composition is skewed to low complexity; the sequence is GLPSPRGPGL. Low complexity predominate over residues 230 to 244; sequence APVVGTTTTTPSPSA. Thr239 is subject to Phosphothreonine. Residues Ser241 and Ser267 each carry the phosphoserine modification. Over residues 262-272 the composition is skewed to acidic residues; the sequence is QEEDDSDEEVA. The span at 287–307 shows a compositional bias: pro residues; that stretch reads GVEPYPYPIPTVPEELPPGTE.

In terms of assembly, interacts with MAD2L2; the interaction is direct. As to expression, ubiquitous in fetal and adult tissues.

The protein resides in the nucleus. May regulate cell cycle progression through interaction with MAD2L2. This Homo sapiens (Human) protein is Proline-rich protein PRCC (PRCC).